Here is a 161-residue protein sequence, read N- to C-terminus: Mediator of RNA polymerase II transcription subunit 31 (161 aa).

The tract at residues 124–161 (GTGVDEQGAQDTQEGEGEQKQNKEEDAQDAQENTESKT) is disordered.

The protein belongs to the Mediator complex subunit 31 family. In terms of assembly, component of the Mediator complex.

Its subcellular location is the nucleus. Functionally, component of the Mediator complex, a coactivator involved in the regulated transcription of nearly all RNA polymerase II-dependent genes. Mediator functions as a bridge to convey information from gene-specific regulatory proteins to the basal RNA polymerase II transcription machinery. Mediator is recruited to promoters by direct interactions with regulatory proteins and serves as a scaffold for the assembly of a functional preinitiation complex with RNA polymerase II and the general transcription factors. The polypeptide is Mediator of RNA polymerase II transcription subunit 31 (soh1) (Aspergillus clavatus (strain ATCC 1007 / CBS 513.65 / DSM 816 / NCTC 3887 / NRRL 1 / QM 1276 / 107)).